The primary structure comprises 197 residues: Ribonuclease HII (197 aa).

One can recognise an RNase H type-2 domain in the interval 11–197; sequence NLIAGVDEVG…FAPVRKILGL (187 aa). 3 residues coordinate a divalent metal cation: D17, E18, and D109.

The protein belongs to the RNase HII family. Mn(2+) is required as a cofactor. The cofactor is Mg(2+).

It is found in the cytoplasm. The enzyme catalyses Endonucleolytic cleavage to 5'-phosphomonoester.. Endonuclease that specifically degrades the RNA of RNA-DNA hybrids. In Haemophilus ducreyi (strain 35000HP / ATCC 700724), this protein is Ribonuclease HII.